Consider the following 283-residue polypeptide: Thymidylate synthase (283 aa).

A dUMP-binding site is contributed by Arg-22. Residue Cys-160 is the Nucleophile of the active site. Residues 180–183 (RSCD), Asn-191, and 221–223 (HIY) each bind dUMP. Asp-183 lines the (6R)-5,10-methylene-5,6,7,8-tetrahydrofolate pocket. Ser-282 contributes to the (6R)-5,10-methylene-5,6,7,8-tetrahydrofolate binding site.

This sequence belongs to the thymidylate synthase family. Bacterial-type ThyA subfamily. Homodimer.

It localises to the cytoplasm. It catalyses the reaction dUMP + (6R)-5,10-methylene-5,6,7,8-tetrahydrofolate = 7,8-dihydrofolate + dTMP. Its pathway is pyrimidine metabolism; dTTP biosynthesis. Catalyzes the reductive methylation of 2'-deoxyuridine-5'-monophosphate (dUMP) to 2'-deoxythymidine-5'-monophosphate (dTMP) while utilizing 5,10-methylenetetrahydrofolate (mTHF) as the methyl donor and reductant in the reaction, yielding dihydrofolate (DHF) as a by-product. This enzymatic reaction provides an intracellular de novo source of dTMP, an essential precursor for DNA biosynthesis. In Haemophilus influenzae (strain PittEE), this protein is Thymidylate synthase.